Here is a 192-residue protein sequence, read N- to C-terminus: Iron sulfur cluster assembly protein 1, mitochondrial (192 aa).

The N-terminal 53 residues, 1–53, are a transit peptide targeting the mitochondrion; that stretch reads MSVFRRSVQCVGVLPSILAQRSSLLARPANLQFLKTNSSKFVPQVTANVSRRM.

Belongs to the NifU family. As to quaternary structure, homodimer. Component of the core Fe-S cluster (ISC) assembly machinery. [2Fe-2S] cluster serves as cofactor.

It is found in the mitochondrion. It localises to the mitochondrion matrix. It participates in cofactor biosynthesis; iron-sulfur cluster biosynthesis. In terms of biological role, scaffold protein for the de novo synthesis of iron-sulfur (Fe-S) clusters within mitochondria, which is required for maturation of both mitochondrial and cytoplasmic [2Fe-2S] and [4Fe-4S] proteins. First, a [2Fe-2S] cluster is transiently assembled on the scaffold protein isu1. In a second step, the cluster is released from isu1, transferred to a glutaredoxin, followed by the formation of mitochondrial [2Fe-2S] proteins, the synthesis of [4Fe-4S] clusters and their target-specific insertion into the recipient apoproteins. Cluster assembly on isu1 depends on the function of the cysteine desulfurase complex nfs1-isd11, which serves as the sulfur donor for cluster synthesis, the iron-binding protein frataxin as the putative iron donor, and the electron transfer chain comprised of ferredoxin reductase and ferredoxin, which receive their electrons from NADH. The sequence is that of Iron sulfur cluster assembly protein 1, mitochondrial (isu1) from Schizosaccharomyces pombe (strain 972 / ATCC 24843) (Fission yeast).